Consider the following 1677-residue polypeptide: ELMO domain-containing protein E (1677 aa).

Disordered regions lie at residues 112-139 (TTTS…SSPS), 168-194 (NSKD…SNIK), 264-372 (QLHG…NTTE), 592-625 (DDDN…RSNS), 775-801 (PNSN…STNN), 888-947 (INKN…NQDI), 982-1002 (KIRS…SQPE), 1047-1075 (STNN…ETRS), 1122-1141 (KQKS…GNVS), 1197-1248 (NNNI…DNHA), 1261-1404 (DDDD…RKKR), 1434-1454 (SPGS…PQPE), 1467-1593 (KNPE…GDVS), and 1654-1677 (ESQR…SSSK). Low complexity-rich tracts occupy residues 115-139 (SSSS…SSPS) and 172-194 (TNNS…SNIK). Residues 269–278 (SIGGGGGGSG) are compositionally biased toward gly residues. 3 stretches are compositionally biased toward low complexity: residues 307 to 334 (SQSN…KPNN), 341 to 352 (TTTTTTTTTTTS), and 597 to 616 (NNNN…NNYN). One can recognise an ELMO domain in the interval 492 to 710 (SHQILLSDLW…HTREIIEKVC (219 aa)). Over residues 891 to 903 (NGGGGGGGGGGGV) the composition is skewed to gly residues. Over residues 922-933 (IDDSDDENDNDE) the composition is skewed to acidic residues. Composition is skewed to low complexity over residues 934 to 946 (VNNN…INQD) and 985 to 996 (SSSSTPDTSSPP). Positions 1186-1212 (LLDDVLDLNQTNNNIDNENDDINEAII) form a coiled coil. The segment covering 1228–1238 (EEEEEEEEEEE) has biased composition (acidic residues). Residues 1285–1305 (NNTTTTTTTTTTTTTTTTNTT) show a composition bias toward low complexity. Over residues 1306-1334 (GQKRISILSTDTNRPGSSNYGESSLSNGS) the composition is skewed to polar residues. A compositionally biased stretch (acidic residues) spans 1387–1397 (DDEDDEDDDDK). Residues 1445–1454 (PHLSVSPQPE) are compositionally biased toward polar residues. Composition is skewed to low complexity over residues 1475-1488 (LSSS…PLLS), 1503-1574 (SNLI…PSSS), and 1663-1677 (ASSS…SSSK).

The protein is ELMO domain-containing protein E (elmoE) of Dictyostelium discoideum (Social amoeba).